We begin with the raw amino-acid sequence, 197 residues long: Recombination protein RecR (197 aa).

A C4-type zinc finger spans residues 56–71 (CSVCGNFDTIDPCAIC). Residues 79 to 174 (SMLCVVEDVA…TVSGLAHGVP (96 aa)) form the Toprim domain.

The protein belongs to the RecR family.

In terms of biological role, may play a role in DNA repair. It seems to be involved in an RecBC-independent recombinational process of DNA repair. It may act with RecF and RecO. The chain is Recombination protein RecR from Paramagnetospirillum magneticum (strain ATCC 700264 / AMB-1) (Magnetospirillum magneticum).